Consider the following 383-residue polypeptide: Protein dyf-4 (383 aa).

A signal peptide spans 1-16 (MKTIWLLLATCIHVFA). An N-linked (GlcNAc...) asparagine glycan is attached at N64.

As to quaternary structure, interacts with daf-6. In terms of tissue distribution, expressed in sheath and socket glial cells in both the amphid and phasmid ciliated sensory neurons (at protein level).

The protein resides in the secreted. Functionally, required for the localization of daf-6 to the socket glial channel and the sheath lumen. In association with daf-6, plays a role in dendrite extension and ciliogenesis to ensure the formation of glial channels in amphid and phasmid ciliated sensory neurons. This is Protein dyf-4 from Caenorhabditis elegans.